The following is a 23-amino-acid chain: Pseudin-4 (23 aa).

Expressed by the skin glands.

Its subcellular location is the secreted. Possesses antifungal activity against C.albicans and is also active against E.coli and S.aureus. This chain is Pseudin-4, found in Pseudis paradoxa (Paradoxical frog).